The chain runs to 447 residues: Exodeoxyribonuclease 7 large subunit (447 aa).

It belongs to the XseA family. Heterooligomer composed of large and small subunits.

The protein resides in the cytoplasm. It carries out the reaction Exonucleolytic cleavage in either 5'- to 3'- or 3'- to 5'-direction to yield nucleoside 5'-phosphates.. Its function is as follows. Bidirectionally degrades single-stranded DNA into large acid-insoluble oligonucleotides, which are then degraded further into small acid-soluble oligonucleotides. This chain is Exodeoxyribonuclease 7 large subunit, found in Exiguobacterium sibiricum (strain DSM 17290 / CCUG 55495 / CIP 109462 / JCM 13490 / 255-15).